The primary structure comprises 100 residues: Large ribosomal subunit protein bL28 (100 aa).

The tract at residues 1–21 (MSRVCDITGQGKSFGNKVSHS) is disordered. Polar residues predominate over residues 10 to 19 (QGKSFGNKVS).

The protein belongs to the bacterial ribosomal protein bL28 family.

This Ehrlichia canis (strain Jake) protein is Large ribosomal subunit protein bL28.